The following is a 446-amino-acid chain: Packaging protein 1 (446 aa).

Residues 1–72 (MEEKAGLRHL…SQVSKSKKQR (72 aa)) form a disordered region. Residues 10-21 (LQNQQNEPSQDP) are compositionally biased toward polar residues. A compositionally biased stretch (basic and acidic residues) spans 32–43 (HSDRNHLNKEAE). 170 to 177 (GPTGCGKS) contributes to the ATP binding site. Residues 439 to 446 (RYYHSKKK) are DNA-binding.

Belongs to the adenoviridae packaging protein 1 family. In terms of assembly, homodimer. Part of a genome packaging complex composed of packaging proteins 1, 2 and 3; this complex specifically binds to the packaging sequence on the left end of viral genomic DNA and performs packaging of the viral genome. Interacts with protein 33K.

It is found in the virion. The protein resides in the host nucleus. Its subcellular location is the host nucleoplasm. It localises to the host nucleolus. Its function is as follows. Component of the packaging machinery which encapsidates the viral DNA into preformed capsids and transcriptional activator of the viral major late promoter (MLP). Binds, along with packaging proteins 2 and 3, to the specific packaging sequence on the left end of viral genomic DNA and displays ATPase activity thereby providing the power stroke of the packaging machinery. The activity of packaging protein IVa2 is stimulated by protein 33K which acts as a terminase. May be the protein that pumps DNA into the capsid powered by ATP hydrolysis. Specifically binds to the 5'-CG-3' nucleotides of the repeats making up the packaging sequence. Component of the DEF-A and DEF-B transcription factors that bind downstream elements of the major late promoter (MLP), and stimulate transcription from the MLP after initiation of viral DNA replication. DEF-A is a heterodimer packaging proteins 1 and 2 and DEF-B is a homodimer of packaging protein 1. In Canine adenovirus serotype 1 (strain CLL) (CAdV-1), this protein is Packaging protein 1.